The primary structure comprises 284 residues: 2-dehydro-3-deoxyphosphooctonate aldolase (284 aa).

The protein belongs to the KdsA family.

It is found in the cytoplasm. The enzyme catalyses D-arabinose 5-phosphate + phosphoenolpyruvate + H2O = 3-deoxy-alpha-D-manno-2-octulosonate-8-phosphate + phosphate. Its pathway is carbohydrate biosynthesis; 3-deoxy-D-manno-octulosonate biosynthesis; 3-deoxy-D-manno-octulosonate from D-ribulose 5-phosphate: step 2/3. The protein operates within bacterial outer membrane biogenesis; lipopolysaccharide biosynthesis. This chain is 2-dehydro-3-deoxyphosphooctonate aldolase, found in Salmonella arizonae (strain ATCC BAA-731 / CDC346-86 / RSK2980).